A 241-amino-acid polypeptide reads, in one-letter code: Leucyl/phenylalanyl-tRNA--protein transferase (241 aa).

It belongs to the L/F-transferase family.

It localises to the cytoplasm. It carries out the reaction N-terminal L-lysyl-[protein] + L-leucyl-tRNA(Leu) = N-terminal L-leucyl-L-lysyl-[protein] + tRNA(Leu) + H(+). It catalyses the reaction N-terminal L-arginyl-[protein] + L-leucyl-tRNA(Leu) = N-terminal L-leucyl-L-arginyl-[protein] + tRNA(Leu) + H(+). The catalysed reaction is L-phenylalanyl-tRNA(Phe) + an N-terminal L-alpha-aminoacyl-[protein] = an N-terminal L-phenylalanyl-L-alpha-aminoacyl-[protein] + tRNA(Phe). Functionally, functions in the N-end rule pathway of protein degradation where it conjugates Leu, Phe and, less efficiently, Met from aminoacyl-tRNAs to the N-termini of proteins containing an N-terminal arginine or lysine. This chain is Leucyl/phenylalanyl-tRNA--protein transferase, found in Neisseria meningitidis serogroup C (strain 053442).